Here is a 366-residue protein sequence, read N- to C-terminus: GTPase Obg (366 aa).

Residues 1 to 162 (MRFVDEAVIK…KSLRLELKIL (162 aa)) form the Obg domain. The tract at residues 125–150 (RGGKGNEHFKSSTMQAPRFSQPGEPG) is disordered. Positions 163–335 (ADAGLLGLPN…VVSEMWRMLA (173 aa)) constitute an OBG-type G domain. Residues 169-176 (GLPNAGKS), 194-198 (FTTLV), 218-221 (DIPG), 288-291 (NKID), and 316-318 (SAL) each bind GTP. Positions 176 and 196 each coordinate Mg(2+).

Belongs to the TRAFAC class OBG-HflX-like GTPase superfamily. OBG GTPase family. As to quaternary structure, monomer. Mg(2+) is required as a cofactor.

The protein localises to the cytoplasm. Functionally, an essential GTPase which binds GTP, GDP and possibly (p)ppGpp with moderate affinity, with high nucleotide exchange rates and a fairly low GTP hydrolysis rate. Plays a role in control of the cell cycle, stress response, ribosome biogenesis and in those bacteria that undergo differentiation, in morphogenesis control. This is GTPase Obg from Oleidesulfovibrio alaskensis (strain ATCC BAA-1058 / DSM 17464 / G20) (Desulfovibrio alaskensis).